The following is a 129-amino-acid chain: MSEQIQSVGRRKEAVCRLYLTPGSGKWLVNGRTLGDYFPRPTLVSAIQQPFTLTDTLGRFDVKATIDGGGVSGQAGAVRLAVARALVQVDETNRKKLREFGLLTRDAREVERKKPGRAGARKRFQFSKR.

This sequence belongs to the universal ribosomal protein uS9 family.

This is Small ribosomal subunit protein uS9 from Gemmatimonas aurantiaca (strain DSM 14586 / JCM 11422 / NBRC 100505 / T-27).